A 257-amino-acid chain; its full sequence is Ribosome-recycling factor, mitochondrial (257 aa).

The protein belongs to the RRF family.

The protein localises to the mitochondrion. Functionally, necessary for protein synthesis in mitochondria. Functions as a ribosome recycling factor in mitochondria. This chain is Ribosome-recycling factor, mitochondrial (RRF1), found in Debaryomyces hansenii (strain ATCC 36239 / CBS 767 / BCRC 21394 / JCM 1990 / NBRC 0083 / IGC 2968) (Yeast).